A 376-amino-acid chain; its full sequence is Cytochrome b (376 aa).

4 consecutive transmembrane segments (helical) span residues 28-48, 72-94, 107-127, and 169-189; these read YGFL…FLAS, WCFR…LHIL, SWIS…IGYV, and FFVL…IHIF. Residues His78 and His92 each contribute to the heme b site. Heme b is bound by residues His173 and His187. Position 192 (His192) interacts with a ubiquinone. 4 helical membrane-spanning segments follow: residues 214–234, 274–294, 317–337, and 340–360; these read LLSL…IQSI, IPSK…LFLL, VPII…CPLP, and IFIL…LFSL.

It belongs to the cytochrome b family. As to quaternary structure, the main subunits of complex b-c1 are: cytochrome b, cytochrome c1 and the Rieske protein. Heme b serves as cofactor.

It localises to the mitochondrion inner membrane. In terms of biological role, component of the ubiquinol-cytochrome c reductase complex (complex III or cytochrome b-c1 complex) that is part of the mitochondrial respiratory chain. The b-c1 complex mediates electron transfer from ubiquinol to cytochrome c. Contributes to the generation of a proton gradient across the mitochondrial membrane that is then used for ATP synthesis. This Plasmodium berghei protein is Cytochrome b (MT-CYB).